The sequence spans 621 residues: Bifunctional protein GlmU (621 aa).

The pyrophosphorylase stretch occupies residues 1–229 (MAERDLAVAI…AREIVGINDR (229 aa)). Residues 11–14 (LAAG), lysine 25, glutamine 76, and 81–82 (GT) contribute to the UDP-N-acetyl-alpha-D-glucosamine site. Aspartate 106 lines the Mg(2+) pocket. UDP-N-acetyl-alpha-D-glucosamine contacts are provided by glycine 143, glutamate 158, asparagine 173, and asparagine 227. Residue asparagine 227 participates in Mg(2+) binding. Residues 230 to 250 (RQLAQAYQILQDRLKEAWMEA) are linker. The tract at residues 251 to 621 (GVTFVDPDSV…TGVGIPSCPP (371 aa)) is N-acetyltransferase. UDP-N-acetyl-alpha-D-glucosamine is bound by residues arginine 332 and lysine 350. Histidine 362 acts as the Proton acceptor in catalysis. Residues tyrosine 365 and asparagine 376 each coordinate UDP-N-acetyl-alpha-D-glucosamine. Residues alanine 379, 385–386 (NY), alanine 422, and arginine 441 contribute to the acetyl-CoA site. The segment at 601–621 (ATPPSPQRADGTGVGIPSCPP) is disordered.

It in the N-terminal section; belongs to the N-acetylglucosamine-1-phosphate uridyltransferase family. The protein in the C-terminal section; belongs to the transferase hexapeptide repeat family. As to quaternary structure, homotrimer. Mg(2+) is required as a cofactor.

It is found in the cytoplasm. The catalysed reaction is alpha-D-glucosamine 1-phosphate + acetyl-CoA = N-acetyl-alpha-D-glucosamine 1-phosphate + CoA + H(+). It catalyses the reaction N-acetyl-alpha-D-glucosamine 1-phosphate + UTP + H(+) = UDP-N-acetyl-alpha-D-glucosamine + diphosphate. It functions in the pathway nucleotide-sugar biosynthesis; UDP-N-acetyl-alpha-D-glucosamine biosynthesis; N-acetyl-alpha-D-glucosamine 1-phosphate from alpha-D-glucosamine 6-phosphate (route II): step 2/2. It participates in nucleotide-sugar biosynthesis; UDP-N-acetyl-alpha-D-glucosamine biosynthesis; UDP-N-acetyl-alpha-D-glucosamine from N-acetyl-alpha-D-glucosamine 1-phosphate: step 1/1. The protein operates within bacterial outer membrane biogenesis; LPS lipid A biosynthesis. Its function is as follows. Catalyzes the last two sequential reactions in the de novo biosynthetic pathway for UDP-N-acetylglucosamine (UDP-GlcNAc). The C-terminal domain catalyzes the transfer of acetyl group from acetyl coenzyme A to glucosamine-1-phosphate (GlcN-1-P) to produce N-acetylglucosamine-1-phosphate (GlcNAc-1-P), which is converted into UDP-GlcNAc by the transfer of uridine 5-monophosphate (from uridine 5-triphosphate), a reaction catalyzed by the N-terminal domain. The sequence is that of Bifunctional protein GlmU from Synechococcus sp. (strain JA-3-3Ab) (Cyanobacteria bacterium Yellowstone A-Prime).